The chain runs to 347 residues: Phenylalanine--tRNA ligase alpha subunit (347 aa).

Glu265 contacts Mg(2+).

It belongs to the class-II aminoacyl-tRNA synthetase family. Phe-tRNA synthetase alpha subunit type 1 subfamily. Tetramer of two alpha and two beta subunits. Mg(2+) is required as a cofactor.

Its subcellular location is the cytoplasm. It catalyses the reaction tRNA(Phe) + L-phenylalanine + ATP = L-phenylalanyl-tRNA(Phe) + AMP + diphosphate + H(+). In Wolbachia sp. subsp. Brugia malayi (strain TRS), this protein is Phenylalanine--tRNA ligase alpha subunit.